Consider the following 134-residue polypeptide: Acyl carrier protein, chloroplastic (134 aa).

The transit peptide at 1-51 (MSTTFCSSVSMQATSLAATTRISFQKPGLVSRTNLSFNLRRSIPTRLSVSC) directs the protein to the chloroplast. Residues 55–130 (PETVEKVSKI…EAAELIEELV (76 aa)) enclose the Carrier domain. Ser90 is subject to O-(pantetheine 4'-phosphoryl)serine.

The protein belongs to the acyl carrier protein (ACP) family. In terms of processing, 4'-phosphopantetheine is transferred from CoA to a specific serine of apo-ACP by acpS. This modification is essential for activity because fatty acids are bound in thioester linkage to the sulfhydryl of the prosthetic group. In terms of tissue distribution, seed.

It is found in the plastid. It localises to the chloroplast. The protein operates within lipid metabolism; fatty acid biosynthesis. In terms of biological role, carrier of the growing fatty acid chain in fatty acid biosynthesis. This chain is Acyl carrier protein, chloroplastic (ACL1.A2), found in Brassica napus (Rape).